The following is a 243-amino-acid chain: uncharacterized protein (243 aa).

A Bipartite nuclear localization signal motif is present at residues 207–224 (KKTSISGYKTLDVKRKFV).

This is an uncharacterized protein from Acheta domesticus (House cricket).